Here is an 88-residue protein sequence, read N- to C-terminus: Large ribosomal subunit protein bL27 (88 aa).

Residues 1–26 (MAHKKGASSSSNGRDSEAKRLGVKRF) form a disordered region.

It belongs to the bacterial ribosomal protein bL27 family.

This Corynebacterium glutamicum (strain R) protein is Large ribosomal subunit protein bL27.